Consider the following 417-residue polypeptide: Phosphoglycerate kinase 2 (417 aa).

14 residues coordinate (2R)-3-phosphoglycerate: Val-23, Asp-24, Phe-25, Asn-26, Asn-38, Arg-39, Ser-62, His-63, Gly-65, Arg-66, Leu-121, Arg-122, His-168, and Arg-169. Gly-212 lines the ADP pocket. Gly-212 is a binding site for CDP. Residues Ala-213 and Lys-214 each contribute to the AMP site. Ala-213 is an ATP binding site. Residue Ala-213 coordinates Mg(2+). Asp-217 is a CDP binding site. Asp-217 contacts Mg(2+). Lys-218 contacts AMP. Lys-218 is a binding site for ATP. Residue Gly-236 coordinates ADP. A CDP-binding site is contributed by Gly-236. Residues Gly-237 and Gly-312 each contribute to the AMP site. ATP is bound by residues Gly-237 and Gly-312. Positions 337 and 342 each coordinate CDP. Residue Phe-342 participates in ADP binding. Glu-343 contributes to the AMP binding site. 3 residues coordinate ATP: Glu-343, Asp-374, and Thr-375. Asp-374 lines the Mg(2+) pocket.

Belongs to the phosphoglycerate kinase family. As to quaternary structure, monomer. Requires Mg(2+) as cofactor.

The protein resides in the cytoplasm. The protein localises to the mitochondrion. The catalysed reaction is (2R)-3-phosphoglycerate + ATP = (2R)-3-phospho-glyceroyl phosphate + ADP. It participates in carbohydrate degradation; glycolysis; pyruvate from D-glyceraldehyde 3-phosphate: step 2/5. Its function is as follows. Catalyzes one of the two ATP producing reactions in the glycolytic pathway via the reversible conversion of 1,3-diphosphoglycerate to 3-phosphoglycerate. Both L- and D- forms of purine and pyrimidine nucleotides can be used as substrates, but the activity is much lower on pyrimidines. Negatively regulates the biosynthesis of acetyl-CoA from pyruvate in the mitochondrion. In Rhizopus niveus, this protein is Phosphoglycerate kinase 2 (PGK2).